Here is a 306-residue protein sequence, read N- to C-terminus: 2-phospho-L-lactate transferase (306 aa).

Residue Asp48 coordinates 7,8-didemethyl-8-hydroxy-5-deazariboflavin.

The protein belongs to the CofD family. In terms of assembly, homodimer. It depends on Mg(2+) as a cofactor.

The catalysed reaction is (2S)-lactyl-2-diphospho-5'-guanosine + 7,8-didemethyl-8-hydroxy-5-deazariboflavin = oxidized coenzyme F420-0 + GMP + H(+). Its pathway is cofactor biosynthesis; coenzyme F420 biosynthesis. Catalyzes the transfer of the 2-phospholactate moiety from (2S)-lactyl-2-diphospho-5'-guanosine to 7,8-didemethyl-8-hydroxy-5-deazariboflavin (FO) with the formation of oxidized coenzyme F420-0 and GMP. This Methanococcoides burtonii (strain DSM 6242 / NBRC 107633 / OCM 468 / ACE-M) protein is 2-phospho-L-lactate transferase.